The chain runs to 76 residues: Dermaseptin-SP2 (76 aa).

A signal peptide spans Met1–Cys22. The propeptide occupies Glu23–Arg45. The segment at Glu24–Lys44 is disordered. Over residues Glu30–Ser41 the composition is skewed to acidic residues. Residue Gln73 is modified to Glutamine amide. Residues Gly74–Gln76 constitute a propeptide that is removed on maturation.

In terms of tissue distribution, expressed by the skin glands.

Its subcellular location is the secreted. It localises to the target cell membrane. Functionally, antimicrobial peptide with activity against Gram-positive and Gram-negative bacteria and fungi. Has been tested against E.coli (MIC=2.68-8 uM), S.aureus (ATCC 25923, MIC=2.68-8 uM), S.aureus (ATCC oxacillin resistant, MIC=2.68 uM), K.pneumoniae (MIC=10.71 uM) and C.albicans (MIC=10.71-32 uM). Probably acts by disturbing membrane functions with its alpha-helical amphipathic structure. May penetrate bacterial membranes, but stay at the mammalian membrane surface. Shows a very weak hemolytic activity. In Agalychnis spurrelli (Gliding leaf frog), this protein is Dermaseptin-SP2.